Reading from the N-terminus, the 222-residue chain is PKHD-type hydroxylase Syncc9605_1577 (222 aa).

The 96-residue stretch at 80–175 (KVHSLLVSRS…RYVCVGWIES (96 aa)) folds into the Fe2OG dioxygenase domain. Residues histidine 98, aspartate 100, and histidine 156 each coordinate Fe cation. Arginine 166 contacts 2-oxoglutarate.

Fe(2+) is required as a cofactor. L-ascorbate serves as cofactor.

The protein is PKHD-type hydroxylase Syncc9605_1577 of Synechococcus sp. (strain CC9605).